Consider the following 497-residue polypeptide: MDQHDDFDSVSWRQDPESDISRPTTSGTDADESLEYNRDTNGKRRMSSVHEDPPQAGPLADAVDLAGIGDGVLECRVDSPLKENDGTKDAYISYLVTTHTDFKSFQKPDFAVRRRFTDFYFLYKTLYREYPACAVPPLPEKHKMEYVTGDRFGPEFTSRRAWSLHRFLKRLTLHPVLRRAPLLAIFLESPDWNAHMRLHSTRTSTGNSDGSGTGIFDNFTDTFVNAFTKVHKPDRRFIEVKEKADKLDEDLNHVEKIVARVARRESDLEADYNDLATQFRKLVPLEPDVEVPLQIFAASVEETARGFKMLKDHTDQNYLGSLRDMEAYIVSVKALLKTREQKQLDFEALVDYRNKAVAERDSLAANPSSYYASNPLTSSPASFIRSKMEDMRGVDHEQSRRERVRKLELRIDELTREVESAKTTSEMFDEEVVREVADFERIKAVEFRDTLGALAEKHIDFFQGAINTWERFVAEMEGDLDNDPEMSEHGRGGGVAA.

The disordered stretch occupies residues 1–59 (MDQHDDFDSVSWRQDPESDISRPTTSGTDADESLEYNRDTNGKRRMSSVHEDPPQAGPL). Basic and acidic residues predominate over residues 35–53 (EYNRDTNGKRRMSSVHEDP). A PX domain is found at 72 to 194 (VLECRVDSPL…IFLESPDWNA (123 aa)). Residues R115, T117, K141, and R160 each coordinate a 1,2-diacyl-sn-glycero-3-phospho-(1D-myo-inositol-3-phosphate). 2 coiled-coil regions span residues 235 to 261 (RRFIEVKEKADKLDEDLNHVEKIVARV) and 397 to 432 (EQSRRERVRKLELRIDELTREVESAKTTSEMFDEEV).

Belongs to the sorting nexin family.

It is found in the cytoplasm. It localises to the cytosol. The protein localises to the preautophagosomal structure membrane. The protein resides in the endosome membrane. Functionally, sorting nexin, involved in the separation or division of vacuoles throughout the entire life cycle of the cells. Involved in retrieval of late-Golgi SNAREs from post-Golgi endosomes to the trans-Golgi network, for cytoplasm to vacuole transport (Cvt), and autophagy of large cargos including mitophagy, pexophagy and glycophagy. The sequence is that of Sorting nexin-4 (snx4) from Aspergillus fumigatus (strain ATCC MYA-4609 / CBS 101355 / FGSC A1100 / Af293) (Neosartorya fumigata).